Consider the following 434-residue polypeptide: Nicotinate phosphoribosyltransferase (434 aa).

Phosphohistidine; by autocatalysis is present on His-242.

Belongs to the NAPRTase family. Post-translationally, transiently phosphorylated on a His residue during the reaction cycle. Phosphorylation strongly increases the affinity for substrates and increases the rate of nicotinate D-ribonucleotide production. Dephosphorylation regenerates the low-affinity form of the enzyme, leading to product release.

The catalysed reaction is nicotinate + 5-phospho-alpha-D-ribose 1-diphosphate + ATP + H2O = nicotinate beta-D-ribonucleotide + ADP + phosphate + diphosphate. Its pathway is cofactor biosynthesis; NAD(+) biosynthesis; nicotinate D-ribonucleotide from nicotinate: step 1/1. Catalyzes the synthesis of beta-nicotinate D-ribonucleotide from nicotinate and 5-phospho-D-ribose 1-phosphate at the expense of ATP. In Brucella abortus (strain S19), this protein is Nicotinate phosphoribosyltransferase.